The primary structure comprises 347 residues: Holliday junction branch migration complex subunit RuvB (347 aa).

Positions 4–184 (QDRIVDGHAS…FGIVQRLEFY (181 aa)) are large ATPase domain (RuvB-L). ATP-binding positions include R24, G65, K68, T69, T70, 131-133 (EDF), R174, Y184, and R221. Position 69 (T69) interacts with Mg(2+). Positions 185 to 255 (SVQDLTHIVK…IADSALNMLN (71 aa)) are small ATPAse domain (RuvB-S). Residues 258–347 (HHGFDHMDRR…SQQQDSLPGI (90 aa)) form a head domain (RuvB-H) region. 3 residues coordinate DNA: R294, R313, and R318.

This sequence belongs to the RuvB family. In terms of assembly, homohexamer. Forms an RuvA(8)-RuvB(12)-Holliday junction (HJ) complex. HJ DNA is sandwiched between 2 RuvA tetramers; dsDNA enters through RuvA and exits via RuvB. An RuvB hexamer assembles on each DNA strand where it exits the tetramer. Each RuvB hexamer is contacted by two RuvA subunits (via domain III) on 2 adjacent RuvB subunits; this complex drives branch migration. In the full resolvosome a probable DNA-RuvA(4)-RuvB(12)-RuvC(2) complex forms which resolves the HJ.

It localises to the cytoplasm. The enzyme catalyses ATP + H2O = ADP + phosphate + H(+). The RuvA-RuvB-RuvC complex processes Holliday junction (HJ) DNA during genetic recombination and DNA repair, while the RuvA-RuvB complex plays an important role in the rescue of blocked DNA replication forks via replication fork reversal (RFR). RuvA specifically binds to HJ cruciform DNA, conferring on it an open structure. The RuvB hexamer acts as an ATP-dependent pump, pulling dsDNA into and through the RuvAB complex. RuvB forms 2 homohexamers on either side of HJ DNA bound by 1 or 2 RuvA tetramers; 4 subunits per hexamer contact DNA at a time. Coordinated motions by a converter formed by DNA-disengaged RuvB subunits stimulates ATP hydrolysis and nucleotide exchange. Immobilization of the converter enables RuvB to convert the ATP-contained energy into a lever motion, pulling 2 nucleotides of DNA out of the RuvA tetramer per ATP hydrolyzed, thus driving DNA branch migration. The RuvB motors rotate together with the DNA substrate, which together with the progressing nucleotide cycle form the mechanistic basis for DNA recombination by continuous HJ branch migration. Branch migration allows RuvC to scan DNA until it finds its consensus sequence, where it cleaves and resolves cruciform DNA. The polypeptide is Holliday junction branch migration complex subunit RuvB (Teredinibacter turnerae (strain ATCC 39867 / T7901)).